A 378-amino-acid chain; its full sequence is Aminomethyltransferase (378 aa).

Belongs to the GcvT family. In terms of assembly, the glycine cleavage system is composed of four proteins: P, T, L and H.

The enzyme catalyses N(6)-[(R)-S(8)-aminomethyldihydrolipoyl]-L-lysyl-[protein] + (6S)-5,6,7,8-tetrahydrofolate = N(6)-[(R)-dihydrolipoyl]-L-lysyl-[protein] + (6R)-5,10-methylene-5,6,7,8-tetrahydrofolate + NH4(+). Its function is as follows. The glycine cleavage system catalyzes the degradation of glycine. This Acidobacterium capsulatum (strain ATCC 51196 / DSM 11244 / BCRC 80197 / JCM 7670 / NBRC 15755 / NCIMB 13165 / 161) protein is Aminomethyltransferase.